We begin with the raw amino-acid sequence, 248 residues long: Triosephosphate isomerase (248 aa).

Residues N10 and K12 each contribute to the substrate site. H95 serves as the catalytic Electrophile. The active-site Proton acceptor is E165.

It belongs to the triosephosphate isomerase family. As to quaternary structure, homodimer.

It carries out the reaction D-glyceraldehyde 3-phosphate = dihydroxyacetone phosphate. It functions in the pathway carbohydrate biosynthesis; gluconeogenesis. Its pathway is carbohydrate degradation; glycolysis; D-glyceraldehyde 3-phosphate from glycerone phosphate: step 1/1. The polypeptide is Triosephosphate isomerase (tpi-1) (Neurospora crassa (strain ATCC 24698 / 74-OR23-1A / CBS 708.71 / DSM 1257 / FGSC 987)).